The following is a 370-amino-acid chain: tRNA-specific 2-thiouridylase MnmA (370 aa).

Residues 9–16 and M35 contribute to the ATP site; that span reads GISGGVDS. The interval 107–109 is interaction with target base in tRNA; it reads NPD. C112 acts as the Nucleophile in catalysis. Residues C112 and C209 are joined by a disulfide bond. An ATP-binding site is contributed by G137. Residues 159 to 161 are interaction with tRNA; that stretch reads KDQ. The active-site Cysteine persulfide intermediate is C209.

The protein belongs to the MnmA/TRMU family.

The protein resides in the cytoplasm. The catalysed reaction is S-sulfanyl-L-cysteinyl-[protein] + uridine(34) in tRNA + AH2 + ATP = 2-thiouridine(34) in tRNA + L-cysteinyl-[protein] + A + AMP + diphosphate + H(+). Catalyzes the 2-thiolation of uridine at the wobble position (U34) of tRNA, leading to the formation of s(2)U34. The chain is tRNA-specific 2-thiouridylase MnmA from Mycoplasma pneumoniae (strain ATCC 29342 / M129 / Subtype 1) (Mycoplasmoides pneumoniae).